We begin with the raw amino-acid sequence, 294 residues long: Elongation factor Ts (294 aa).

Residues 81-84 are involved in Mg(2+) ion dislocation from EF-Tu; sequence TDFV.

This sequence belongs to the EF-Ts family.

It is found in the cytoplasm. Its function is as follows. Associates with the EF-Tu.GDP complex and induces the exchange of GDP to GTP. It remains bound to the aminoacyl-tRNA.EF-Tu.GTP complex up to the GTP hydrolysis stage on the ribosome. This Hydrogenovibrio crunogenus (strain DSM 25203 / XCL-2) (Thiomicrospira crunogena) protein is Elongation factor Ts.